The sequence spans 1325 residues: Nonribosomal peptide synthetase (1325 aa).

The interval 248–644 (YQQLDRLSTR…LGEIEYQIQQ (397 aa)) is adenylation. The 78-residue stretch at 779 to 856 (EIVNPGEITL…DQARLLRPLS (78 aa)) folds into the Carrier domain. Residue S816 is modified to O-(pantetheine 4'-phosphoryl)serine. The condensation stretch occupies residues 893–1310 (EDVYPCTPLQ…DDYSTTLHTL (418 aa)).

It belongs to the NRP synthetase family. Pantetheine 4'-phosphate serves as cofactor.

Its pathway is antifungal biosynthesis. Its function is as follows. Nonribosomal peptide synthetase; part of the gene cluster that mediates the biosynthesis of the tetrahydropyranyl antifungal agent lanomycin that acts as an inhibitor of CYP51 and blocks the ergosterol biosynthesis. The biosynthesis probably begins with the formation of an hexaketide, followed by methionine mediated alkylation of C-2 and C-6, and methylation of the reduced C-3 oxygen, pyran forming reductive ring closure, oxygenation of C-4, beta-keto reduction, enoyl reduction and dehydration of the remaining oxygens, and finally, acylation with glycine to complete the biosynthesis. The polypeptide is Nonribosomal peptide synthetase (Pyrenophora dematioidea (Helminthosporium dematioideum)).